The primary structure comprises 256 residues: CCAAT/enhancer-binding protein delta (256 aa).

Serine 2 is subject to N-acetylserine. 3 disordered regions span residues 18-40, 92-121, and 139-206; these read TAEPAAFYEPGRAGKPGRGAEPA, GGPARLGGPGPAPRPLKREPDWGDGDAPGS, and AAAQ…NQEM. Lysine 108 is covalently cross-linked (Glycyl lysine isopeptide (Lys-Gly) (interchain with G-Cter in SUMO)). Pro residues predominate over residues 143-162; sequence PTPPASPEPPRRSPAPPAPG. A compositionally biased stretch (basic and acidic residues) spans 164–188; sequence ARDKAAGKRGPDRGSPEYRQRRERN. One can recognise a bZIP domain in the interval 178–241; the sequence is SPEYRQRRER…AGLRRFFKQL (64 aa). Residues 182–209 form a basic motif region; the sequence is RQRRERNNIAVRKSRDKAKRRNQEMQQK. The tract at residues 213–241 is leucine-zipper; the sequence is LSAENEKLQQRVEQLTRDLAGLRRFFKQL.

Belongs to the bZIP family. C/EBP subfamily. In terms of assembly, binds DNA as a homodimer and as a heterodimer. Can form stable heterodimers with CEBPB. Can form stable heterodimers with CEBPA and CEBPE. Directly interacts with SPI1/PU.1; this interaction does not affect DNA-binding properties of each partner. Interacts with PRDM16.

The protein resides in the nucleus. In terms of biological role, transcription activator that recognizes two different DNA motifs: the CCAAT homology common to many promoters and the enhanced core homology common to many enhancers. Important transcription factor regulating the expression of genes involved in immune and inflammatory responses. Transcriptional activator that enhances IL6 transcription alone and as heterodimer with CEBPB. This Bos taurus (Bovine) protein is CCAAT/enhancer-binding protein delta (CEBPD).